A 440-amino-acid polypeptide reads, in one-letter code: Trigger factor (440 aa).

Positions 160-253 (KDTVIGDALR…VTEVKRLELP (94 aa)) constitute a PPIase FKBP-type domain.

Belongs to the FKBP-type PPIase family. Tig subfamily.

Its subcellular location is the cytoplasm. It carries out the reaction [protein]-peptidylproline (omega=180) = [protein]-peptidylproline (omega=0). In terms of biological role, involved in protein export. Acts as a chaperone by maintaining the newly synthesized protein in an open conformation. Functions as a peptidyl-prolyl cis-trans isomerase. The protein is Trigger factor of Chlorobium chlorochromatii (strain CaD3).